Consider the following 472-residue polypeptide: Poly(A) polymerase catalytic subunit (472 aa).

Residues Asp-191 and Asp-193 contribute to the active site.

Belongs to the poxviridae poly(A) polymerase catalytic subunit family. Heterodimer of a large (catalytic) subunit and a small (regulatory) subunit.

The enzyme catalyses RNA(n) + ATP = RNA(n)-3'-adenine ribonucleotide + diphosphate. Functionally, polymerase that creates the 3'-poly(A) tail of mRNA's. The chain is Poly(A) polymerase catalytic subunit (PAPL) from Capra hircus (Goat).